Consider the following 68-residue polypeptide: Large ribosomal subunit protein bL31 (68 aa).

Residues Cys16, Cys18, Cys36, and Cys39 each contribute to the Zn(2+) site.

It belongs to the bacterial ribosomal protein bL31 family. Type A subfamily. Part of the 50S ribosomal subunit. Requires Zn(2+) as cofactor.

In terms of biological role, binds the 23S rRNA. The protein is Large ribosomal subunit protein bL31 of Lachnospira eligens (strain ATCC 27750 / DSM 3376 / VPI C15-48 / C15-B4) (Eubacterium eligens).